The primary structure comprises 207 residues: Small ribosomal subunit protein uS4 (207 aa).

Residues 31-55 are disordered; that stretch reads KCKLDSKPGQHGRTSGARTSDYGTQ. Positions 42–53 are enriched in polar residues; that stretch reads GRTSGARTSDYG. One can recognise an S4 RNA-binding domain in the interval 97-160; that stretch reads SRLDNVVYRM…KKQARIVEAL (64 aa).

This sequence belongs to the universal ribosomal protein uS4 family. In terms of assembly, part of the 30S ribosomal subunit. Contacts protein S5. The interaction surface between S4 and S5 is involved in control of translational fidelity.

Functionally, one of the primary rRNA binding proteins, it binds directly to 16S rRNA where it nucleates assembly of the body of the 30S subunit. Its function is as follows. With S5 and S12 plays an important role in translational accuracy. In Burkholderia lata (strain ATCC 17760 / DSM 23089 / LMG 22485 / NCIMB 9086 / R18194 / 383), this protein is Small ribosomal subunit protein uS4.